Reading from the N-terminus, the 170-residue chain is RNA pyrophosphohydrolase (170 aa).

A Nudix hydrolase domain is found at 6–149; that stretch reads GFRPNVGIVI…KRDVYRRALK (144 aa). The short motif at 38-59 is the Nudix box element; that stretch reads GGIDDGETPEQAMYRELYEEVG.

The protein belongs to the Nudix hydrolase family. RppH subfamily. A divalent metal cation serves as cofactor.

In terms of biological role, accelerates the degradation of transcripts by removing pyrophosphate from the 5'-end of triphosphorylated RNA, leading to a more labile monophosphorylated state that can stimulate subsequent ribonuclease cleavage. The chain is RNA pyrophosphohydrolase from Aliivibrio fischeri (strain ATCC 700601 / ES114) (Vibrio fischeri).